The sequence spans 238 residues: Ribonuclease PH (238 aa).

Residues Arg-86 and 124-126 (GTR) contribute to the phosphate site.

The protein belongs to the RNase PH family. Homohexameric ring arranged as a trimer of dimers.

It carries out the reaction tRNA(n+1) + phosphate = tRNA(n) + a ribonucleoside 5'-diphosphate. Phosphorolytic 3'-5' exoribonuclease that plays an important role in tRNA 3'-end maturation. Removes nucleotide residues following the 3'-CCA terminus of tRNAs; can also add nucleotides to the ends of RNA molecules by using nucleoside diphosphates as substrates, but this may not be physiologically important. Probably plays a role in initiation of 16S rRNA degradation (leading to ribosome degradation) during starvation. The protein is Ribonuclease PH of Actinobacillus pleuropneumoniae serotype 5b (strain L20).